The following is an 85-amino-acid chain: MKQGIHPDYHKVIFLDSTTDFKFLSGSTRTSSETMTWEDGNEYPVIRLDISSDSHPFYTGRQKFASADGRVERFNKKFGFKSSNE.

Belongs to the bacterial ribosomal protein bL31 family. Type B subfamily. Part of the 50S ribosomal subunit.

The sequence is that of Large ribosomal subunit protein bL31B from Macrococcus caseolyticus (strain JCSC5402) (Macrococcoides caseolyticum).